The primary structure comprises 570 residues: Peptidyl-prolyl cis-trans isomerase-like 2 (570 aa).

The region spanning 37–110 (KRLPFNFCSL…GDYVDPVTYK (74 aa)) is the U-box domain. Disordered regions lie at residues 215-253 (RSER…KPTP), 428-449 (STTL…PTPD), and 469-570 (KKAE…SSWD). The span at 234 to 248 (STTTSTQSKTASFQS) shows a compositional bias: low complexity. Positions 298 to 457 (QKGYARISTT…PDIRITDVTI (160 aa)) constitute a PPIase cyclophilin-type domain. Residues 428–446 (STTLNNLETHPVNSSTNRP) are compositionally biased toward polar residues. Over residues 469–483 (KKAEEASGKNKKVDP) the composition is skewed to basic and acidic residues. 2 stretches are compositionally biased toward acidic residues: residues 484 to 497 (TEED…DDDQ) and 535 to 550 (QEED…EPEP).

It belongs to the cyclophilin-type PPIase family. PPIL2 subfamily.

The protein localises to the nucleus. The enzyme catalyses [protein]-peptidylproline (omega=180) = [protein]-peptidylproline (omega=0). It catalyses the reaction S-ubiquitinyl-[E2 ubiquitin-conjugating enzyme]-L-cysteine + [acceptor protein]-L-lysine = [E2 ubiquitin-conjugating enzyme]-L-cysteine + N(6)-ubiquitinyl-[acceptor protein]-L-lysine.. Functionally, may catalyze the cis-trans isomerization of proline imidic peptide bonds in oligopeptides thereby assisting the folding of proteins. May also function as a chaperone, playing a role in intracellular transport of proteins. May also have a protein ubiquitin ligase activity acting as an E3 ubiquitin protein ligase or as a ubiquitin-ubiquitin ligase promoting elongation of ubiquitin chains on proteins. In Aspergillus oryzae (strain ATCC 42149 / RIB 40) (Yellow koji mold), this protein is Peptidyl-prolyl cis-trans isomerase-like 2 (cyp8).